A 278-amino-acid chain; its full sequence is Methyltransferase GfsG (278 aa).

S-adenosyl-L-methionine is bound by residues Q105 and 128-129; that span reads DA. Catalysis depends on E146, which acts as the Proton acceptor. H150 lines the S-adenosyl-L-methionine pocket.

It belongs to the methyltransferase superfamily.

It functions in the pathway antibiotic biosynthesis. Methylase required for synthesis of the 16-membered macrolide antibiotics FD-891 and FD-892. In vitro uses S-adenosyl-L-methionine to methylate a number of biosynthetic intermediates in the synthesis of FD-891. In Streptomyces halstedii, this protein is Methyltransferase GfsG.